The chain runs to 420 residues: MKHNLQDNLQGEQMANTNSNGGKKPFSDAKIIERANLLRDNDLYFFFRAIEETEASTVTVKGKKQIMIGSNNYLGLTHHPAVKEAAIKAVEKYGTGCTGSRFLNGNLNIHEELDEKLAAYLGHEKAIVFSTGMQANLGALSAICGPKDLMLFDSENHASIIDASRLSLGTTFKYKHNDMASLEELLESNMSRFNRVIIVADGVFSMTGDILRLPEVVKLAKKYGAYVYVDDAHGLGVMGPQGRGTMAHFDVTKDVDFNMGTFSKSFASIGGVISGSKDAIDYVRHSARSFMFSASMPPAAVATVSACIDVVQNDETILNNLWSNVEFMRNGFKELGFFTYGSQTPIIPLFIGDDMKALKMTKWLESKGVFCTPVLPPAVPKGETLIRTSYMASHNREDLSTVLEVFAEAKKIFDIPNHLH.

A compositionally biased stretch (polar residues) spans 1–21 (MKHNLQDNLQGEQMANTNSNG). The interval 1–25 (MKHNLQDNLQGEQMANTNSNGGKKP) is disordered. Residues 132–133 (GM), histidine 233, threonine 261, and serine 263 each bind pyridoxal 5'-phosphate. Lysine 264 is subject to N6-(pyridoxal phosphate)lysine.

It belongs to the class-II pyridoxal-phosphate-dependent aminotransferase family. Homodimer. The cofactor is pyridoxal 5'-phosphate.

It is found in the cytoplasm. The protein localises to the cell inner membrane. The catalysed reaction is L-serine + hexadecanoyl-CoA + H(+) = 3-oxosphinganine + CO2 + CoA. Its pathway is lipid metabolism; sphingolipid metabolism. Significantly inhibited by palmitoyl-CoA concentrations greater than 100 uM. Its function is as follows. Catalyzes the condensation of L-serine with palmitoyl-CoA (hexadecanoyl-CoA) to produce 3-oxosphinganine. The chain is Serine palmitoyltransferase from Bacteriovorax stolpii (Bdellovibrio stolpii).